Reading from the N-terminus, the 558-residue chain is TNF receptor-associated factor 5 (558 aa).

Residues 45–85 (CAFCHSVLHNPHQTGCGHRFCQQCIRSLRELNSVPICPVDK) form an RING-type zinc finger. 2 consecutive TRAF-type zinc fingers follow at residues 127–181 (DHLQ…TNLQ) and 182–239 (DHEE…GNLL). A coiled-coil region spans residues 252–302 (LVLEKNYQLEQRISDLYQSLEQKESKIQQLAETVKKFEKELKQFTQMFGRN). Residue lysine 318 forms a Glycyl lysine isopeptide (Lys-Gly) (interchain with G-Cter in ubiquitin) linkage. The stretch at 340-400 (LDLRSLVDAV…EERFKQLEGA (61 aa)) forms a coiled coil. Residues 345–558 (LVDAVDSVKQ…AVDLTDLEDL (214 aa)) form an interaction with EIF2AK2/PKR region. The MATH domain occupies 403-550 (SGKLIWKVTD…DDTLFLKVAV (148 aa)).

Belongs to the TNF receptor-associated factor family. A subfamily. In terms of assembly, homotrimer. Heterotrimer with TRAF3. Associates with TNFRSF5/CD40 through interaction with TRAF3. Associates with LTBR/TNFRSF3, TNFRSF4, TNFRSF8/CD30, TNFRSF11A/RANK, TNFRSF13B/TACI, TNFRSF14, TNFRSF17, TNFRSF19/TROY, RIPK2, MAP3K14, MAP3K5, and TRAF and TNF receptor associated protein TDP2. Interacts (via C-terminus) with EIF2AK2/PKR (via the kinase catalytic domain). In terms of processing, ubiquitinated at Lys-318 by the SCF(FBXL2) complex, leading to its degradation by the proteasome.

It is found in the cytoplasm. It localises to the cytosol. Functionally, adapter protein and signal transducer that links members of the tumor necrosis factor receptor family to different signaling pathways by association with the receptor cytoplasmic domain and kinases. Mediates activation of NF-kappa-B and probably JNK. Seems to be involved in apoptosis. Plays a role in mediating activation of NF-kappa-B by EIF2AK2/PKR. This Mus musculus (Mouse) protein is TNF receptor-associated factor 5 (Traf5).